The following is a 496-amino-acid chain: UDP-N-acetylmuramoyl-L-alanyl-D-glutamate--2,6-diaminopimelate ligase (496 aa).

Serine 32 provides a ligand contact to UDP-N-acetyl-alpha-D-muramoyl-L-alanyl-D-glutamate. 116 to 122 (GTNGKTT) serves as a coordination point for ATP. UDP-N-acetyl-alpha-D-muramoyl-L-alanyl-D-glutamate-binding positions include 158 to 159 (TT), serine 185, glutamine 191, and arginine 193. Lysine 225 is modified (N6-carboxylysine). Meso-2,6-diaminopimelate-binding positions include arginine 389, 413 to 416 (DNPR), glycine 464, and glutamate 468. The Meso-diaminopimelate recognition motif signature appears at 413–416 (DNPR).

This sequence belongs to the MurCDEF family. MurE subfamily. It depends on Mg(2+) as a cofactor. In terms of processing, carboxylation is probably crucial for Mg(2+) binding and, consequently, for the gamma-phosphate positioning of ATP.

Its subcellular location is the cytoplasm. It catalyses the reaction UDP-N-acetyl-alpha-D-muramoyl-L-alanyl-D-glutamate + meso-2,6-diaminopimelate + ATP = UDP-N-acetyl-alpha-D-muramoyl-L-alanyl-gamma-D-glutamyl-meso-2,6-diaminopimelate + ADP + phosphate + H(+). It participates in cell wall biogenesis; peptidoglycan biosynthesis. Functionally, catalyzes the addition of meso-diaminopimelic acid to the nucleotide precursor UDP-N-acetylmuramoyl-L-alanyl-D-glutamate (UMAG) in the biosynthesis of bacterial cell-wall peptidoglycan. The chain is UDP-N-acetylmuramoyl-L-alanyl-D-glutamate--2,6-diaminopimelate ligase from Nostoc sp. (strain PCC 7120 / SAG 25.82 / UTEX 2576).